Reading from the N-terminus, the 329-residue chain is GTPase Obg (329 aa).

Positions 1-159 (MQFIDQARIT…WFLQLELKLL (159 aa)) constitute an Obg domain. The OBG-type G domain occupies 160 to 328 (AEVGIIGLPN…LLAQVWKELG (169 aa)). ATP contacts are provided by residues 166 to 173 (GLPNAGKS), 191 to 195 (FTTLV), 213 to 216 (DIPG), 280 to 283 (NKQE), and 309 to 311 (SAA). Serine 173 and threonine 193 together coordinate Mg(2+).

Belongs to the TRAFAC class OBG-HflX-like GTPase superfamily. OBG GTPase family. As to quaternary structure, monomer. Mg(2+) is required as a cofactor.

It localises to the cytoplasm. Functionally, an essential GTPase which binds GTP, GDP and possibly (p)ppGpp with moderate affinity, with high nucleotide exchange rates and a fairly low GTP hydrolysis rate. Plays a role in control of the cell cycle, stress response, ribosome biogenesis and in those bacteria that undergo differentiation, in morphogenesis control. The sequence is that of GTPase Obg from Prochlorococcus marinus (strain MIT 9313).